Consider the following 105-residue polypeptide: Nucleoid-associated protein ABO_1774 (105 aa).

Residues 85 to 105 (QQQDSMQNMAGGFPFPPGFKP) are disordered.

The protein belongs to the YbaB/EbfC family. As to quaternary structure, homodimer.

The protein resides in the cytoplasm. It localises to the nucleoid. Functionally, binds to DNA and alters its conformation. May be involved in regulation of gene expression, nucleoid organization and DNA protection. This chain is Nucleoid-associated protein ABO_1774, found in Alcanivorax borkumensis (strain ATCC 700651 / DSM 11573 / NCIMB 13689 / SK2).